The sequence spans 142 residues: Putative pre-16S rRNA nuclease (142 aa).

Belongs to the YqgF nuclease family.

The protein localises to the cytoplasm. Could be a nuclease involved in processing of the 5'-end of pre-16S rRNA. The protein is Putative pre-16S rRNA nuclease of Lactobacillus acidophilus (strain ATCC 700396 / NCK56 / N2 / NCFM).